Consider the following 93-residue polypeptide: Pyrimidine/purine nucleoside phosphorylase (93 aa).

It belongs to the nucleoside phosphorylase PpnP family.

The catalysed reaction is a purine D-ribonucleoside + phosphate = a purine nucleobase + alpha-D-ribose 1-phosphate. The enzyme catalyses adenosine + phosphate = alpha-D-ribose 1-phosphate + adenine. It catalyses the reaction cytidine + phosphate = cytosine + alpha-D-ribose 1-phosphate. It carries out the reaction guanosine + phosphate = alpha-D-ribose 1-phosphate + guanine. The catalysed reaction is inosine + phosphate = alpha-D-ribose 1-phosphate + hypoxanthine. The enzyme catalyses thymidine + phosphate = 2-deoxy-alpha-D-ribose 1-phosphate + thymine. It catalyses the reaction uridine + phosphate = alpha-D-ribose 1-phosphate + uracil. It carries out the reaction xanthosine + phosphate = alpha-D-ribose 1-phosphate + xanthine. Catalyzes the phosphorolysis of diverse nucleosides, yielding D-ribose 1-phosphate and the respective free bases. Can use uridine, adenosine, guanosine, cytidine, thymidine, inosine and xanthosine as substrates. Also catalyzes the reverse reactions. The protein is Pyrimidine/purine nucleoside phosphorylase of Pseudomonas paraeruginosa (strain DSM 24068 / PA7) (Pseudomonas aeruginosa (strain PA7)).